We begin with the raw amino-acid sequence, 654 residues long: Pyoverdine export ATP-binding/permease protein PvdT (654 aa).

The ABC transporter domain occupies isoleucine 6–leucine 245. Glycine 43–serine 50 serves as a coordination point for ATP. The next 4 membrane-spanning stretches (helical) occupy residues alanine 282–glycine 302, leucine 529–methionine 549, alanine 584–alanine 604, and alanine 614–phenylalanine 634.

This sequence belongs to the ABC transporter superfamily. Macrolide exporter (TC 3.A.1.122) family. As to quaternary structure, part of the tripartite efflux system PvdRT-OpmQ, which is composed of an inner membrane component with both ATPase and permease domains, PvdT, a periplasmic membrane fusion protein, PvdR, and an outer membrane component, OpmQ.

It is found in the cell inner membrane. Its activity is regulated as follows. Has a basal ATPase activity that is stimulated by PvdR. In vitro, interaction with PVD influences the affinity of PvdT to PvdR. Its function is as follows. Part of the tripartite efflux system PvdRT-OpmQ required for the secretion into the extracellular milieu of the siderophore pyoverdine (PVD), which is involved in iron acquisition. This subunit binds PVD and drives its secretion by hydrolyzing ATP. The system is responsible for export of newly synthesized PVD after the final steps of biosynthesis have taken place in the periplasm. It is also responsible for recycling of PVD after internalization of ferri-PVD into the periplasm by the outer-membrane receptor FpvA and release of iron from PVD, thus making PVD available for new cycles of iron uptake. Contributes to resistance against ampicillin. This chain is Pyoverdine export ATP-binding/permease protein PvdT, found in Pseudomonas putida (strain ATCC 47054 / DSM 6125 / CFBP 8728 / NCIMB 11950 / KT2440).